A 785-amino-acid polypeptide reads, in one-letter code: Formin-like protein 3 (785 aa).

Residues 1–20 form the signal peptide; that stretch reads MGRLRLAFLAISLVVFVCVS. Residues 96–145 form a disordered region; the sequence is YDWLAPASSPNEPPAETPDESSPSPSEETPSVVAPSQSVPGPPRPPPQRE. Over residues 115–134 the composition is skewed to low complexity; sequence ESSPSPSEETPSVVAPSQSV. The helical transmembrane segment at 154-174 threads the bilayer; the sequence is LIIAVASTAVLTFVFVALMFL. Disordered regions lie at residues 184-228, 241-329, and 730-785; these read AVGS…KKRS, EFST…APKT, and ETTK…SSPS. Residues 201 to 223 show a composition bias toward polar residues; sequence STGSTENSPTVASTSRKMFSVAS. Pro residues predominate over residues 256–303; sequence LKLPPGRSAPPPPPAAAPPPQPPPPPPPKPQPPPPPKIARPPPAPPKG. An FH2 domain is found at 321 to 747; the sequence is DSETGAPKTK…SGKKESEMTT (427 aa). A compositionally biased stretch (polar residues) spans 745–754; sequence MTTSDSNQPS. Acidic residues predominate over residues 773 to 785; sequence SDDSDDEEDSSPS.

It belongs to the formin-like family. Class-I subfamily.

It localises to the membrane. Functionally, acts as actin nucleation factor that directs the formation of actin cables and polarized growth in pollen tubes. This chain is Formin-like protein 3 (FH3), found in Arabidopsis thaliana (Mouse-ear cress).